The primary structure comprises 130 residues: Albumin-1 C (130 aa).

Positions 1–26 (MASVKLASLIVLFATLGMFLTKNVGA) are cleaved as a signal peptide. Intrachain disulfides connect Cys29–Cys46, Cys33–Cys48, and Cys41–Cys58. 2 propeptides span residues 64–69 (VFLRTN) and 123–130 (LLKSVSTA).

In terms of processing, the C-terminal glycine may be removed from PA1b. Major component of both the cotyledons and embryonic axes of mature seeds.

In terms of biological role, PA1b binds to basic 7S globulin (BG) and stimulates its phosphorylation activity. Involved in the signal transduction system to regulate the growth and differentiation as a hormone peptide. Toxic to various insects through binding to a high affinity binding site in the insect gut. This Pisum sativum (Garden pea) protein is Albumin-1 C.